Consider the following 143-residue polypeptide: Nucleoside diphosphate kinase (143 aa).

6 residues coordinate ATP: Lys11, Phe59, Arg87, Thr93, Arg104, and Asn114. His117 acts as the Pros-phosphohistidine intermediate in catalysis.

It belongs to the NDK family. As to quaternary structure, homotetramer. Mg(2+) serves as cofactor.

Its subcellular location is the cytoplasm. The enzyme catalyses a 2'-deoxyribonucleoside 5'-diphosphate + ATP = a 2'-deoxyribonucleoside 5'-triphosphate + ADP. It carries out the reaction a ribonucleoside 5'-diphosphate + ATP = a ribonucleoside 5'-triphosphate + ADP. Major role in the synthesis of nucleoside triphosphates other than ATP. The ATP gamma phosphate is transferred to the NDP beta phosphate via a ping-pong mechanism, using a phosphorylated active-site intermediate. This chain is Nucleoside diphosphate kinase, found in Shewanella sp. (strain ANA-3).